A 437-amino-acid polypeptide reads, in one-letter code: UDP-N-acetylmuramate--L-alanine ligase (437 aa).

Residue 108–114 (GAHGKTS) coordinates ATP.

Belongs to the MurCDEF family.

Its subcellular location is the cytoplasm. It catalyses the reaction UDP-N-acetyl-alpha-D-muramate + L-alanine + ATP = UDP-N-acetyl-alpha-D-muramoyl-L-alanine + ADP + phosphate + H(+). It functions in the pathway cell wall biogenesis; peptidoglycan biosynthesis. In terms of biological role, cell wall formation. In Staphylococcus aureus (strain MRSA252), this protein is UDP-N-acetylmuramate--L-alanine ligase.